The sequence spans 1893 residues: CDK5 regulatory subunit-associated protein 2 (1893 aa).

Residues 51-94 (TVSPTRARNMKDFENQITELKKENFNLKLRIYFLEERMQQEFHG) form a CM1 motif; interacts with the gTuRC region. The segment at 58–196 (RNMKDFENQI…TEKALRLRLE (139 aa)) is interaction with NCKAP5L. Phosphoserine is present on Ser547. The segment at 926-1208 (PGVTNREAKK…LENLKQQLEE (283 aa)) is interaction with MAPRE1. A Phosphothreonine modification is found at Thr1001. The segment at 1015–1071 (AAYQDSPGEQKGIKTTSSVWRDKEMDSDQQTSYEIDSEICPPDDLASLPSCKENPED) is disordered. The segment at 1196-1893 (SRVLENLKQQ…GTCSPSRPGS (698 aa)) is interaction with PCNT and AKAP9. Ser1238 carries the phosphoserine modification. Disordered stretches follow at residues 1347-1381 (LPES…NETE) and 1467-1486 (IKGS…SLSR). The span at 1469-1486 (GSRDKQKENDKLRESLSR) shows a compositional bias: basic and acidic residues. Ser1490 is subject to Phosphoserine. The segment covering 1500–1519 (SVKEENERLQKEGSEKERHN) has biased composition (basic and acidic residues). Residues 1500-1521 (SVKEENERLQKEGSEKERHNQQ) are disordered. 2 positions are modified to phosphoserine: Ser1663 and Ser1666. Disordered stretches follow at residues 1675-1706 (AVTP…ATST) and 1752-1774 (DVQT…PHPA). The tract at residues 1726–1768 (HVLGLIEDYEALLKQISQGQRLLAEMDVQTQEAPSSTSQELGT) is interaction with CDK5R1. Residues 1753–1766 (VQTQEAPSSTSQEL) are compositionally biased toward polar residues. Residues 1861 to 1870 (VVTHKILRKA) form a required for centrosomal attachment, Golgi localization and CALM1 interaction region. Positions 1874–1893 (LELRPGGSHPGTCSPSRPGS) are disordered. Polar residues predominate over residues 1884 to 1893 (GTCSPSRPGS). Ser1893 carries the phosphoserine modification.

In terms of assembly, homodimer. Interacts with CDK5R1 (p35 form). CDK5RAP1, CDK5RAP2 and CDK5RAP3 show competitive binding to CDK5R1. May form a complex with CDK5R1 and CDK5. Interacts with pericentrin/PCNT; the interaction is leading to centrosomal and Golgi localization of CDK5RAP2 and PCNT. Interacts with AKAP9; the interaction targets CDK5RAP2 and AKAP9 to Golgi apparatus. Interacts with MAPRE1; the interaction is direct and targets CDK5RAP2 and EB1/MAPRE1 to microtubule plus ends. Interacts with TUBG1; the interaction is leading to the centrosomal localization of CDK5RAP2 and TUBG1. Interacts with TUBGCP3. Interacts with CALM1. Interacts with CDC20. Interacts with CEP68; degradation of CEP68 in early mitosis leads to removal of CDK5RAP2 from the centrosome which promotes centriole disengagement and subsequent centriole separation. Interacts with NCKAP5L. Forms a pericentrosomal complex with AKAP9, MAPRE1 and PDE4DIP isoform 13/MMG8/SMYLE; within this complex, MAPRE1 binding to CDK5RAP2 may be mediated by PDE4DIP. Interacts with LGALS3BP; this interaction may connect the pericentrosomal complex to the gamma-tubulin ring complex (gTuRC) to promote microtubule assembly and acetylation. Interacts with CCDC66. Associates (via CM1 motif) with TUBGCP2 of the gTuRC; the interaction plays a role in gTuRC activation. In terms of processing, phosphorylated in vitro by CDK5.

It is found in the cytoplasm. Its subcellular location is the cytoskeleton. It localises to the microtubule organizing center. The protein localises to the centrosome. The protein resides in the golgi apparatus. Its function is as follows. Potential regulator of CDK5 activity via its interaction with CDK5R1. Negative regulator of centriole disengagement (licensing) which maintains centriole engagement and cohesion. Involved in regulation of mitotic spindle orientation. Plays a role in the spindle checkpoint activation by acting as a transcriptional regulator of both BUBR1 and MAD2 promoter. Together with EB1/MAPRE1, may promote microtubule polymerization, bundle formation, growth and dynamics at the plus ends. Regulates centrosomal maturation by recruitment of the gamma-tubulin ring complex (gTuRC) onto centrosomes. In complex with PDE4DIP isoform 13/MMG8/SMYLE, MAPRE1 and AKAP9, contributes to microtubules nucleation and extension from the centrosome to the cell periphery. Required for the recruitment of AKAP9 to centrosomes. Plays a role in neurogenesis. This is CDK5 regulatory subunit-associated protein 2 (CDK5RAP2) from Pan troglodytes (Chimpanzee).